We begin with the raw amino-acid sequence, 539 residues long: Eukaryotic translation initiation factor 3 subunit L (539 aa).

A PCI domain is found at 306–514 (TFSDILLYIQ…IHIADTKVSH (209 aa)).

This sequence belongs to the eIF-3 subunit L family. In terms of assembly, component of the eukaryotic translation initiation factor 3 (eIF-3) complex. The eIF-3 complex interacts with pix.

It localises to the cytoplasm. In terms of biological role, component of the eukaryotic translation initiation factor 3 (eIF-3) complex, which is involved in protein synthesis of a specialized repertoire of mRNAs and, together with other initiation factors, stimulates binding of mRNA and methionyl-tRNAi to the 40S ribosome. The eIF-3 complex specifically targets and initiates translation of a subset of mRNAs involved in cell proliferation. The chain is Eukaryotic translation initiation factor 3 subunit L from Drosophila sechellia (Fruit fly).